Here is a 1029-residue protein sequence, read N- to C-terminus: uncharacterized protein (1029 aa).

The segment covering 1-23 (MREWCMLRESRTNTPRRAAERGK) has biased composition (basic and acidic residues). Residues 1–31 (MREWCMLRESRTNTPRRAAERGKRPGGSSVR) are disordered. A Guanylate cyclase domain is found at 39–168 (TALCYDLVGS…AALAMAARLQ (130 aa)). 261–268 (GDAGIGKS) is a binding site for ATP.

This is an uncharacterized protein from Rhizobium meliloti (strain 1021) (Ensifer meliloti).